We begin with the raw amino-acid sequence, 145 residues long: Monooxygenase AacuP (145 aa).

It belongs to the avfA family.

It participates in secondary metabolite biosynthesis. Its function is as follows. Monooxygenase; part of the gene cluster that mediates the biosynthesis of the tetrahydroxanthone dimer secalonic acid D. The pathway begins with the synthesis of atrochrysone thioester by the polyketide synthase AacuL. The atrochrysone carboxyl ACP thioesterase AacuM then breaks the thioester bond and releases the atrochrysone carboxylic acid from AacuL. Atrochrysone carboxylic acid is decarboxylated by the decarboxylase AacuI, and oxidized by the anthrone oxygenase AacuG to yield emodin. Emodin is then reduced to emodin hydroquinone by a yet unidentified oxidoreductase. A-ring reduction by the short chain dehydrogenase AacuN, dehydration by the scytalone dehydratase-like protein AacuK and probable spontaneous re-oxidation, results in overall deoxygenation to chrysophanol. Baeyer-Villiger oxidation by the Baeyer-Villiger monooxygenase (BVMO) AacuH then yields monodictyphenone. Monodictyphenone is transformed into compounds with the tetrahydroxanthone skeleton via methylesterification by the methyltransferase AacuQ, followed by the action of the flavin-dependent monooxygenase AacuC, the isomerase AacuP, and the short chain dehydrogenase/reductase AacuF or AacuD. AacuF and AacuD should accept the same compound as a substrate but perform the ketoreduction with a different stereoselectivity, thus yielding blennolides B and A, respectively. In the final step of the biosynthesis, the cytochrome P450 monooxygenase AacuE accepts blennolide B and/or blennolide A to conduct the dimerization reaction to furnish the tetrahydroxanthone dimers, secalonic acids D, B, and F. This Aspergillus aculeatus (strain ATCC 16872 / CBS 172.66 / WB 5094) protein is Monooxygenase AacuP.